The sequence spans 88 residues: Phosphocarrier protein HPr (88 aa).

Positions 1-88 (MKTQQFTVID…TLLTEMGLAQ (88 aa)) constitute an HPr domain. Catalysis depends on histidine 15, which acts as the Pros-phosphohistidine intermediate. Residue serine 46 is modified to Phosphoserine; by HPrK/P.

This sequence belongs to the HPr family.

The protein resides in the cytoplasm. With respect to regulation, phosphorylation on Ser-46 inhibits the phosphoryl transfer from enzyme I to HPr. Its function is as follows. General (non sugar-specific) component of the phosphoenolpyruvate-dependent sugar phosphotransferase system (sugar PTS). This major carbohydrate active-transport system catalyzes the phosphorylation of incoming sugar substrates concomitantly with their translocation across the cell membrane. The phosphoryl group from phosphoenolpyruvate (PEP) is transferred to the phosphoryl carrier protein HPr by enzyme I. Phospho-HPr then transfers it to the PTS EIIA domain. Functionally, P-Ser-HPr interacts with the catabolite control protein A (CcpA), forming a complex that binds to DNA at the catabolite response elements cre, operator sites preceding a large number of catabolite-regulated genes. Thus, P-Ser-HPr is a corepressor in carbon catabolite repression (CCR), a mechanism that allows bacteria to coordinate and optimize the utilization of available carbon sources. P-Ser-HPr also plays a role in inducer exclusion, in which it probably interacts with several non-PTS permeases and inhibits their transport activity. The polypeptide is Phosphocarrier protein HPr (ptsH) (Lysinibacillus sphaericus (Bacillus sphaericus)).